The sequence spans 364 residues: Tyrosine--tRNA ligase (364 aa).

L-tyrosine-binding residues include Tyr41, Tyr167, Gln171, Asp174, and Gln189. The short motif at Lys238–Ser242 is the 'KMSKS' region element. Lys241 contributes to the ATP binding site.

The protein belongs to the class-I aminoacyl-tRNA synthetase family. TyrS type 4 subfamily. In terms of assembly, homodimer.

The protein resides in the cytoplasm. It catalyses the reaction tRNA(Tyr) + L-tyrosine + ATP = L-tyrosyl-tRNA(Tyr) + AMP + diphosphate + H(+). Functionally, catalyzes the attachment of tyrosine to tRNA(Tyr) in a two-step reaction: tyrosine is first activated by ATP to form Tyr-AMP and then transferred to the acceptor end of tRNA(Tyr). This chain is Tyrosine--tRNA ligase, found in Sulfurisphaera tokodaii (strain DSM 16993 / JCM 10545 / NBRC 100140 / 7) (Sulfolobus tokodaii).